The chain runs to 347 residues: tRNA pseudouridine synthase D (347 aa).

Asp-81 functions as the Nucleophile in the catalytic mechanism. The 147-residue stretch at Gly-158–Leu-304 folds into the TRUD domain.

It belongs to the pseudouridine synthase TruD family.

The enzyme catalyses uridine(13) in tRNA = pseudouridine(13) in tRNA. In terms of biological role, responsible for synthesis of pseudouridine from uracil-13 in transfer RNAs. In Vibrio vulnificus (strain CMCP6), this protein is tRNA pseudouridine synthase D.